The primary structure comprises 331 residues: Cytosolic arginine sensor for mTORC1 subunit 1 (331 aa).

A Phosphoserine modification is found at S14. ACT domains lie at 72-137 and 259-320; these read AEAT…HTLA and GELW…DILQ. L-arginine is bound by residues 110–111, G273, 279–280, and 299–303; these read SV, IV, and TFNFD.

It belongs to the GATS family. Forms homodimers and heterodimers with CASTOR2. Interacts with the GATOR2 complex which is composed of MIOS, SEC13, SEH1L, WDR24 and WDR59; the interaction is negatively regulated by arginine. Interacts with TM4SF5; the interaction is positively regulated by leucine and is negatively regulated by arginine. In terms of processing, phosphorylation at Ser-14 by AKT1, promoting the interaction between CASTOR1 and RNF167. Ubiquitinated by RNF167 via 'Lys-29'-polyubiquitination, leading to its degradation, releasing the GATOR2 complex. Ubiquitination by RNF167 is promoted by phosphorylation at Ser-14 by AKT1.

It is found in the cytoplasm. Its subcellular location is the cytosol. In terms of biological role, functions as an intracellular arginine sensor within the amino acid-sensing branch of the TORC1 signaling pathway. As a homodimer or a heterodimer with CASTOR2, binds and inhibits the GATOR subcomplex GATOR2 and thereby mTORC1. Binding of arginine to CASTOR1 allosterically disrupts the interaction of CASTOR1-containing dimers with GATOR2 which can in turn activate mTORC1 and the TORC1 signaling pathway. The protein is Cytosolic arginine sensor for mTORC1 subunit 1 of Mus musculus (Mouse).